The chain runs to 125 residues: Basic leucine zipper transcriptional factor ATF-like (125 aa).

Residues 1–14 (MPHSSDSSDSSFSR) are compositionally biased toward low complexity. The tract at residues 1-59 (MPHSSDSSDSSFSRSPPPGKQDSSDDVRKVQRREKNRIAAQKSRQRQTQKADTLHLESE) is disordered. In terms of domain architecture, bZIP spans 26–89 (DVRKVQRREK…KYFTSVLSSH (64 aa)). A basic motif region spans residues 28-50 (RKVQRREKNRIAAQKSRQRQTQK). A Phosphoserine modification is found at S43. The residue at position 48 (T48) is a Phosphothreonine. The segment at 54–75 (LHLESEDLEKQNAALRKEIKQL) is leucine-zipper.

This sequence belongs to the bZIP family. As to quaternary structure, heterodimer; mainly heterodimerizes with JUNB. The BATF-JUNB heterodimer interacts with IRF4 and IRF8. Interacts (via bZIP domain) with IRF4 and IRF8; the interaction is direct. Also forms heterodimers with JUN and JUND. Interacts with IFI35. Post-translationally, phosphorylated on serine and threonine residues and at least one tyrosine residue. Phosphorylation at Ser-43 inhibit DNA binding activity and transforms it as a negative regulator of AP-1 mediated transcription. Detected in postnatal and adult lymphoid tissues such as thymus, spleen and lymph nodes. In thymus most concentrated expression is found in the immediate cortical layer. Differentially expressed during T-cell development in thymus. Highly expressed in Th17, Th1 and Th2 cells and in activated B-cells.

Its subcellular location is the nucleus. The protein localises to the cytoplasm. Its function is as follows. AP-1 family transcription factor that controls the differentiation of lineage-specific cells in the immune system: specifically mediates the differentiation of T-helper 17 cells (Th17), follicular T-helper cells (TfH), CD8(+) dendritic cells and class-switch recombination (CSR) in B-cells. Acts via the formation of a heterodimer with JUNB that recognizes and binds DNA sequence 5'-TGA[CG]TCA-3'. The BATF-JUNB heterodimer also forms a complex with IRF4 (or IRF8) in immune cells, leading to recognition of AICE sequence (5'-TGAnTCA/GAAA-3'), an immune-specific regulatory element, followed by cooperative binding of BATF and IRF4 (or IRF8) and activation of genes. Controls differentiation of T-helper cells producing interleukin-17 (Th17 cells) by binding to Th17-associated gene promoters: regulates expression of the transcription factor RORC itself and RORC target genes such as IL17 (IL17A or IL17B). Also involved in differentiation of follicular T-helper cells (TfH) by directing expression of BCL6 and MAF. In B-cells, involved in class-switch recombination (CSR) by controlling the expression of both AICDA and of germline transcripts of the intervening heavy-chain region and constant heavy-chain region (I(H)-C(H)). Following infection, can participate in CD8(+) dendritic cell differentiation via interaction with IRF4 and IRF8 to mediate cooperative gene activation. Regulates effector CD8(+) T-cell differentiation by regulating expression of SIRT1. Following DNA damage, part of a differentiation checkpoint that limits self-renewal of hematopoietic stem cells (HSCs): up-regulated by STAT3, leading to differentiation of HSCs, thereby restricting self-renewal of HSCs. The polypeptide is Basic leucine zipper transcriptional factor ATF-like (Batf) (Mus musculus (Mouse)).